The following is a 212-amino-acid chain: MSFVVAIDGPAAAGKGTLSRLIAKRYGFHHLDTGLTYRAAAKALIDAGLPLDDEAVAEKTARQVDLSGLDRAVLSAHAIGEAASKIAVMPAVRRALVEAQRAFALKEPGTVLDGRDIGTVVCPDAAVKLYVTASPEVRAKRRYDEIVTGGGTADYTTIFEDVKKRDTRDMGRADSPLRPAEDAHLLDTSEMSIEAAFQAAKTLIDVALNKTI.

ATP is bound at residue 9–17 (GPAAAGKGT).

It belongs to the cytidylate kinase family. Type 1 subfamily.

It localises to the cytoplasm. It catalyses the reaction CMP + ATP = CDP + ADP. The enzyme catalyses dCMP + ATP = dCDP + ADP. This chain is Cytidylate kinase, found in Sinorhizobium medicae (strain WSM419) (Ensifer medicae).